Here is a 280-residue protein sequence, read N- to C-terminus: MSSQADARRITAPQIQARKGGEPIVSLTSYHSHTARLLDRHVDVILVGDSLGMVMHGMETTVPVTVEMMIVHGRAVVRGTKRALIVVDLPFGSYEASHTEAFHTAARVLKETGAGAVKLEGGRRMAETVRFLVDRGVPVMGHVGLTPQAINTLGSFKARGRDDAEASIILDDARAIAEAGAFSIVLEAIAEPLARRITQEVAPPTIGIGGSPACDGQILVLEDMLGLGDRVPKFVKKYANLGPDIEKAVASYADEVRARTFPAAEHTYAPRLVEKPAKAS.

Mg(2+) is bound by residues Asp49 and Asp88. 3-methyl-2-oxobutanoate is bound by residues 49-50, Asp88, and Lys118; that span reads DS. Residue Glu120 participates in Mg(2+) binding. Catalysis depends on Glu187, which acts as the Proton acceptor.

This sequence belongs to the PanB family. In terms of assembly, homodecamer; pentamer of dimers. The cofactor is Mg(2+).

It localises to the cytoplasm. The catalysed reaction is 3-methyl-2-oxobutanoate + (6R)-5,10-methylene-5,6,7,8-tetrahydrofolate + H2O = 2-dehydropantoate + (6S)-5,6,7,8-tetrahydrofolate. Its pathway is cofactor biosynthesis; (R)-pantothenate biosynthesis; (R)-pantoate from 3-methyl-2-oxobutanoate: step 1/2. Its function is as follows. Catalyzes the reversible reaction in which hydroxymethyl group from 5,10-methylenetetrahydrofolate is transferred onto alpha-ketoisovalerate to form ketopantoate. In Xanthobacter autotrophicus (strain ATCC BAA-1158 / Py2), this protein is 3-methyl-2-oxobutanoate hydroxymethyltransferase.